The sequence spans 79 residues: Conotoxin 8 (79 aa).

The N-terminal stretch at Met1 to Ala22 is a signal peptide. A propeptide spanning residues Asp23 to Arg47 is cleaved from the precursor. 3 disulfides stabilise this stretch: Cys49–Cys62, Cys56–Cys67, and Cys61–Cys77.

This sequence belongs to the conotoxin O1 superfamily. Expressed by the venom duct.

The protein localises to the secreted. This Conus vexillum (Flag cone) protein is Conotoxin 8.